The chain runs to 348 residues: Histidinol-phosphate aminotransferase (348 aa).

Residues 1-31 (MLPTRDCVRQTPAYTPGEQPQTAGFTKLNTN) form a disordered region. The span at 18–31 (EQPQTAGFTKLNTN) shows a compositional bias: polar residues. Lysine 207 is modified (N6-(pyridoxal phosphate)lysine).

Belongs to the class-II pyridoxal-phosphate-dependent aminotransferase family. Histidinol-phosphate aminotransferase subfamily. In terms of assembly, homodimer. Pyridoxal 5'-phosphate serves as cofactor.

The enzyme catalyses L-histidinol phosphate + 2-oxoglutarate = 3-(imidazol-4-yl)-2-oxopropyl phosphate + L-glutamate. The protein operates within amino-acid biosynthesis; L-histidine biosynthesis; L-histidine from 5-phospho-alpha-D-ribose 1-diphosphate: step 7/9. This is Histidinol-phosphate aminotransferase from Microcystis aeruginosa (strain NIES-843 / IAM M-2473).